Reading from the N-terminus, the 879-residue chain is Probable phospholipid transport protein YdbH (879 aa).

The Cytoplasmic segment spans residues 1 to 6 (MLGKYK). Residues 7–29 (AVLALLLLIILVPLTLLMTLGLW) traverse the membrane as a helical segment. At 30 to 879 (VPTLAGIWLP…PQGKECEEKQ (850 aa)) the chain is on the periplasmic side.

In terms of assembly, interacts with the outer membrane lipoprotein YnbE.

Its subcellular location is the cell inner membrane. Its function is as follows. Involved in outer membrane lipid homeostasis. Interacts with the outer membrane lipoprotein YnbE to form a functional protein bridge connecting the inner and outer membranes of the cell. Likely transports phospholipids between the inner membrane and the outer membrane. It would provide a bridge-like structure that protects phospholipids as they travel across the periplasm. TamB, YdbH and YhdP are redundant, but not equivalent, in performing an essential function for growth and maintaining lipid homeostasis in the outer membrane. Any of these three proteins is sufficient for growth. This is Probable phospholipid transport protein YdbH (ydbH) from Escherichia coli (strain K12).